We begin with the raw amino-acid sequence, 367 residues long: Protein trichome birefringence-like 39 (367 aa).

The chain crosses the membrane as a helical; Signal-anchor for type II membrane protein span at residues 7-29 (GNPSFLFFFFFFLCLSTVSAYIN). The short motif at 120-122 (GDS) is the GDS motif element. Positions 343–357 (DCSHWCLPGLPDTWN) match the DCXHWCLPGXXDXWN motif motif.

Belongs to the PC-esterase family. TBL subfamily.

It localises to the membrane. May act as a bridging protein that binds pectin and other cell wall polysaccharides. Probably involved in maintaining esterification of pectins. May be involved in the specific O-acetylation of cell wall polymers. In Arabidopsis thaliana (Mouse-ear cress), this protein is Protein trichome birefringence-like 39 (TBL39).